Here is a 339-residue protein sequence, read N- to C-terminus: Ketol-acid reductoisomerase (NADP(+)) (339 aa).

The 182-residue stretch at 1 to 182 (MRVYYDRDAD…GGGRSGIIET (182 aa)) folds into the KARI N-terminal Rossmann domain. NADP(+)-binding positions include 24-27 (YGSQ), R48, S51, S53, and 83-86 (DELQ). The active site involves H108. G134 lines the NADP(+) pocket. The region spanning 183-328 (TFREECETDL…EKLRGMMPWI (146 aa)) is the KARI C-terminal knotted domain. Mg(2+)-binding residues include D191, E195, E227, and E231. S252 is a substrate binding site.

Belongs to the ketol-acid reductoisomerase family. Mg(2+) is required as a cofactor.

It carries out the reaction (2R)-2,3-dihydroxy-3-methylbutanoate + NADP(+) = (2S)-2-acetolactate + NADPH + H(+). It catalyses the reaction (2R,3R)-2,3-dihydroxy-3-methylpentanoate + NADP(+) = (S)-2-ethyl-2-hydroxy-3-oxobutanoate + NADPH + H(+). It participates in amino-acid biosynthesis; L-isoleucine biosynthesis; L-isoleucine from 2-oxobutanoate: step 2/4. It functions in the pathway amino-acid biosynthesis; L-valine biosynthesis; L-valine from pyruvate: step 2/4. Its function is as follows. Involved in the biosynthesis of branched-chain amino acids (BCAA). Catalyzes an alkyl-migration followed by a ketol-acid reduction of (S)-2-acetolactate (S2AL) to yield (R)-2,3-dihydroxy-isovalerate. In the isomerase reaction, S2AL is rearranged via a Mg-dependent methyl migration to produce 3-hydroxy-3-methyl-2-ketobutyrate (HMKB). In the reductase reaction, this 2-ketoacid undergoes a metal-dependent reduction by NADPH to yield (R)-2,3-dihydroxy-isovalerate. This Magnetospirillum molischianum (Rhodospirillum molischianum) protein is Ketol-acid reductoisomerase (NADP(+)).